We begin with the raw amino-acid sequence, 270 residues long: 3-phenylpropionate-dihydrodiol/cinnamic acid-dihydrodiol dehydrogenase (270 aa).

10-34 (FITGGGSGLGLALVERFIEEGAQVA) provides a ligand contact to NAD(+). Serine 143 is a binding site for substrate. Tyrosine 156 acts as the Proton acceptor in catalysis.

The protein belongs to the short-chain dehydrogenases/reductases (SDR) family.

The catalysed reaction is 3-(cis-5,6-dihydroxycyclohexa-1,3-dien-1-yl)propanoate + NAD(+) = 3-(2,3-dihydroxyphenyl)propanoate + NADH + H(+). The enzyme catalyses (2E)-3-(cis-5,6-dihydroxycyclohexa-1,3-dien-1-yl)prop-2-enoate + NAD(+) = (2E)-3-(2,3-dihydroxyphenyl)prop-2-enoate + NADH + H(+). The protein operates within aromatic compound metabolism; 3-phenylpropanoate degradation. Functionally, converts 3-phenylpropionate-dihydrodiol (PP-dihydrodiol) and cinnamic acid-dihydrodiol (CI-dihydrodiol) into 3-(2,3-dihydroxylphenyl)propanoic acid (DHPP) and 2,3-dihydroxicinnamic acid (DHCI), respectively. The polypeptide is 3-phenylpropionate-dihydrodiol/cinnamic acid-dihydrodiol dehydrogenase (Escherichia coli O7:K1 (strain IAI39 / ExPEC)).